Consider the following 447-residue polypeptide: Probable glycine dehydrogenase (decarboxylating) subunit 1 (447 aa).

Belongs to the GcvP family. N-terminal subunit subfamily. In terms of assembly, the glycine cleavage system is composed of four proteins: P, T, L and H. In this organism, the P 'protein' is a heterodimer of two subunits.

The enzyme catalyses N(6)-[(R)-lipoyl]-L-lysyl-[glycine-cleavage complex H protein] + glycine + H(+) = N(6)-[(R)-S(8)-aminomethyldihydrolipoyl]-L-lysyl-[glycine-cleavage complex H protein] + CO2. Functionally, the glycine cleavage system catalyzes the degradation of glycine. The P protein binds the alpha-amino group of glycine through its pyridoxal phosphate cofactor; CO(2) is released and the remaining methylamine moiety is then transferred to the lipoamide cofactor of the H protein. This chain is Probable glycine dehydrogenase (decarboxylating) subunit 1, found in Bacillus mycoides (strain KBAB4) (Bacillus weihenstephanensis).